Consider the following 129-residue polypeptide: Small ribosomal subunit protein uS11 (129 aa).

This sequence belongs to the universal ribosomal protein uS11 family. Part of the 30S ribosomal subunit. Interacts with proteins S7 and S18. Binds to IF-3.

Functionally, located on the platform of the 30S subunit, it bridges several disparate RNA helices of the 16S rRNA. Forms part of the Shine-Dalgarno cleft in the 70S ribosome. This chain is Small ribosomal subunit protein uS11, found in Bacillus mycoides (strain KBAB4) (Bacillus weihenstephanensis).